The primary structure comprises 33 residues: Ferredoxin (33 aa).

A 2Fe-2S ferredoxin-type domain is found at 3–33; the sequence is KYKVRLLSEAEGIDVTIDSADDVYILDAAEE.

The protein belongs to the 2Fe2S plant-type ferredoxin family. Requires [2Fe-2S] cluster as cofactor.

Its subcellular location is the plastid. It localises to the chloroplast. Functionally, ferredoxins are iron-sulfur proteins that transfer electrons in a wide variety of metabolic reactions. This Porphyridium aerugineum (Red microalga) protein is Ferredoxin.